The sequence spans 386 residues: MTASVLLHPRWIEPTVMFLYDNGGGLVADELNKNMEGAAAAAAAAAAAAAAGAGGGGFPHPAAAAAGGNFSVAAAAAAAAAAAANQCRNLMAHPAPLAPGAAAAYSSAPGEAPPSAAAAAAAAAAAAAAAAAASSSGGPGPAGPAGAEAAKQCSPCSAAAQSSSGPAALPYGYFGSGYYPCARMGPHPNAIKSCAQPASAAAAFADKYMDTAGPAAEEFSSRAKEFAFYHQGYAAGPYHHHQPVPGYLDMPVVPGLGGPGESRHEPLGLPMESYQPWALPNGWNGQMYCPKEQTQPPHLWKSTLPDVVSHPSDASSYRRGRKKRVPYTKVQLKELEREYATNKFITKDKRRRISATTNLSERQVTIWFQNRRVKEKKVINKLKTTS.

Positions 320-379 form a DNA-binding region, homeobox; that stretch reads GRKKRVPYTKVQLKELEREYATNKFITKDKRRRISATTNLSERQVTIWFQNRRVKEKKVI.

This sequence belongs to the Abd-B homeobox family. As to quaternary structure, binds DNA as a homodimer. Interacts with MEIS1, MEIS2 and MEIS3.

It is found in the nucleus. Functionally, sequence-specific, AT-rich binding transcription factor which is part of a developmental regulatory system that provides cells with specific positional identities on the anterior-posterior axis. The protein is Homeobox protein Hox-A13 (Hoxa13) of Mus musculus (Mouse).